A 628-amino-acid polypeptide reads, in one-letter code: tRNA 5-methylaminomethyl-2-thiouridine biosynthesis bifunctional protein MnmC (628 aa).

Positions 1-237 (MSSYSPLVPP…KWHMTVGVRE (237 aa)) are tRNA (mnm(5)s(2)U34)-methyltransferase. An FAD-dependent cmnm(5)s(2)U34 oxidoreductase region spans residues 265–628 (VGGGLAGAGI…ADLLAAVAPR (364 aa)).

This sequence in the N-terminal section; belongs to the methyltransferase superfamily. tRNA (mnm(5)s(2)U34)-methyltransferase family. In the C-terminal section; belongs to the DAO family. It depends on FAD as a cofactor.

Its subcellular location is the cytoplasm. It carries out the reaction 5-aminomethyl-2-thiouridine(34) in tRNA + S-adenosyl-L-methionine = 5-methylaminomethyl-2-thiouridine(34) in tRNA + S-adenosyl-L-homocysteine + H(+). In terms of biological role, catalyzes the last two steps in the biosynthesis of 5-methylaminomethyl-2-thiouridine (mnm(5)s(2)U) at the wobble position (U34) in tRNA. Catalyzes the FAD-dependent demodification of cmnm(5)s(2)U34 to nm(5)s(2)U34, followed by the transfer of a methyl group from S-adenosyl-L-methionine to nm(5)s(2)U34, to form mnm(5)s(2)U34. This is tRNA 5-methylaminomethyl-2-thiouridine biosynthesis bifunctional protein MnmC from Bordetella petrii (strain ATCC BAA-461 / DSM 12804 / CCUG 43448).